An 866-amino-acid chain; its full sequence is Fibrinogen alpha chain (866 aa).

The N-terminal stretch at 1–19 (MFSMRIVCLVLSVVGTAWT) is a signal peptide. Position 22 is a phosphoserine (Ser22). The interval 36 to 38 (GPR) is alpha-chain polymerization, binding distal domain of another fibrin gamma chain. Ser45 is subject to Phosphoserine; by FAM20C. A Phosphoserine modification is found at Ser50. Ser56 bears the Phosphoserine; by FAM20C mark. Positions 68-631 (CRMKGLIDEV…GHAKSRPVRD (564 aa)) form a coiled coil. Positions 262 to 460 (ERPGGNEITR…SGSTTTTRRS (199 aa)) are disordered. The span at 270 to 299 (TRGGSTSYGTGSETESPRNPSSAGSWNSGS) shows a compositional bias: low complexity. Residues Ser281, Ser291, and Ser294 each carry the phosphoserine modification. A glycan (O-linked (GalNAc...) threonine) is linked at Thr320. An Isoglutamyl lysine isopeptide (Lys-Gln) (interchain with Q-41 in alpha-2-antiplasmin) cross-link involves residue Lys322. Gln347 is covalently cross-linked (Isoglutamyl lysine isopeptide (Gln-Lys) (interchain with K-?)). An O-linked (GalNAc...) serine glycan is attached at Ser351. Polar residues predominate over residues 354-391 (PGSTGTWNPGSSERGSAGHWTSESSVSGSTGQWHSESG). Ser364 bears the Phosphoserine; by FAM20C mark. Gln385 participates in a covalent cross-link: Isoglutamyl lysine isopeptide (Gln-Lys) (interchain with K-?). Position 412 is a phosphothreonine (Thr412). Residues 424-449 (TRREYHTEKLVTSKGDKELRTGKEKV) are compositionally biased toward basic and acidic residues. Over residues 450 to 460 (TSGSTTTTRRS) the composition is skewed to low complexity. Ser451 is modified (phosphoserine). Ser453 is a glycosylation site (N-linked (GlcNAc...) asparagine; in variant Caracas-2). Residues Cys461 and Cys491 are joined by a disulfide bond. Ser501 bears the Phosphoserine mark. Residue Thr505 is modified to Phosphothreonine. At Ser524 the chain carries Phosphoserine; by FAM20C. Residues Lys527 and Lys558 each participate in an isoglutamyl lysine isopeptide (Lys-Gln) (interchain with Q-?) cross-link. Residues 543–638 (ETESRGSESG…VRDCDDVLQT (96 aa)) form a disordered region. Ser560 is subject to Phosphoserine; by FAM20C. Residue Pro565 is modified to 4-hydroxyproline; by P4HA1. Isoglutamyl lysine isopeptide (Lys-Gln) (interchain with Q-?) cross-links involve residues Lys575, Lys581, and Lys599. Over residues 575 to 589 (KSSSYSKQFTSSTSY) the composition is skewed to low complexity. Basic and acidic residues predominate over residues 594–617 (STFESKSYKMADEAGSEADHEGTH). Ser609 bears the Phosphoserine; by FAM20C mark. Over residues 618–627 (STKRGHAKSR) the composition is skewed to basic residues. Residues 623-864 (HAKSRPVRDC…AVRMKIRPLV (242 aa)) enclose the Fibrinogen C-terminal domain. The N-linked (GlcNAc...) asparagine glycan is linked to Asn686. 4 residues coordinate Ca(2+): Asp791, Asp793, Trp795, and Glu797. A disulfide bridge connects residues Cys799 and Cys812.

As to quaternary structure, heterohexamer; disulfide linked. Contains 2 sets of 3 non-identical chains (alpha, beta and gamma). The 2 heterotrimers are in head to head conformation with the N-termini in a small central domain. In terms of assembly, (Microbial infection) Interacts with Staphylococcus aureus protein Fib; this interaction inhibits fibrinogen-dependent platelet aggregation and protects the bacteria form phagocytosis. Post-translationally, the alpha chain is normally not N-glycosylated, even though glycosylation at Asn-686 was observed when a fragment of the protein was expressed in insect cells. It is well known that heterologous expression of isolated domains can lead to adventitious protein modifications. Besides, glycosylation at Asn-686 is supported by large-scale glycoproteomics studies, but the evidence is still quite tenuous. Most likely, Asn-686 is not glycosylated in the healthy human body, or only with low efficiency. O-glycosylated. In terms of processing, forms F13A-mediated cross-links between a glutamine and the epsilon-amino group of a lysine residue, forming fibronectin-fibrinogen heteropolymers. Post-translationally, about one-third of the alpha chains in the molecules in blood were found to be phosphorylated. Conversion of fibrinogen to fibrin is triggered by thrombin, which cleaves fibrinopeptides A and B from alpha and beta chains, and thus exposes the N-terminal polymerization sites responsible for the formation of the soft clot. The soft clot is converted into the hard clot by factor XIIIA which catalyzes the epsilon-(gamma-glutamyl)lysine cross-linking between gamma chains (stronger) and between alpha chains (weaker) of different monomers. In terms of processing, phosphorylated by FAM20C in the extracellular medium. Detected in blood plasma (at protein level).

The protein resides in the secreted. Cleaved by the protease thrombin to yield monomers which, together with fibrinogen beta (FGB) and fibrinogen gamma (FGG), polymerize to form an insoluble fibrin matrix. Fibrin has a major function in hemostasis as one of the primary components of blood clots. In addition, functions during the early stages of wound repair to stabilize the lesion and guide cell migration during re-epithelialization. Was originally thought to be essential for platelet aggregation, based on in vitro studies using anticoagulated blood. However, subsequent studies have shown that it is not absolutely required for thrombus formation in vivo. Enhances expression of SELP in activated platelets via an ITGB3-dependent pathway. Maternal fibrinogen is essential for successful pregnancy. Fibrin deposition is also associated with infection, where it protects against IFNG-mediated hemorrhage. May also facilitate the immune response via both innate and T-cell mediated pathways. In Homo sapiens (Human), this protein is Fibrinogen alpha chain (FGA).